Reading from the N-terminus, the 292-residue chain is Siderophore triacetylfusarinine C esterase (292 aa).

Residues Arg-97, Ser-148, Tyr-149, Ser-174, Trp-176, and His-267 each coordinate triacetylfusarinine C.

The protein belongs to the esterase D family.

The protein localises to the cytoplasm. It catalyses the reaction triacetylfusarinine C + 3 H2O = 3 N-acetylfusarinine + Fe(3+). In terms of biological role, displays specific triacetylfusarinine C (TAFC) esterase activity but does not hydrolyze fusarinine C, which has the same core structure as TAFC. Hydrolysis optimizes but is not essential for TAFC-mediated iron uptake. Both extra- and intracellular siderophores have been shown to be crucial for the virulence. Subsequent to chelation of iron and uptake, FsC and TAFC are hydrolyzed and the iron is transferred to the metabolism or to the intracellular siderophore ferricrocin (FC) for transport and storage of iron. Hydrolyzes both TAFC and DF-TAFC with equal efficiencies, suggesting that its function might not be restricted to the release of iron from the siderophore but might also include the degradation of the iron-free chelator to protect cells. The protein is Siderophore triacetylfusarinine C esterase of Aspergillus fumigatus (strain ATCC MYA-4609 / CBS 101355 / FGSC A1100 / Af293) (Neosartorya fumigata).